The following is a 158-amino-acid chain: C-type lectin lectoxin-Thr1 (158 aa).

Residues 1-23 (MGRFIFATLGLLLVAFSINGAKG) form the signal peptide. Disulfide bonds link cysteine 26-cysteine 37, cysteine 54-cysteine 154, and cysteine 129-cysteine 146. Residues 33–155 (LKGFCYKVFN…CASTRAYLCK (123 aa)) form the C-type lectin domain. The Mannose-binding signature appears at 119-121 (EPN). Glutamate 127, asparagine 142, and aspartate 143 together coordinate Ca(2+).

The protein belongs to the true venom lectin family. Expressed by the venom gland.

The protein resides in the secreted. In terms of biological role, mannose-binding lectin which recognizes specific carbohydrate structures and agglutinates a variety of animal cells by binding to cell-surface glycoproteins and glycolipids. May be a calcium-dependent lectin. This chain is C-type lectin lectoxin-Thr1, found in Thrasops jacksonii (Jackson's black tree snake).